The chain runs to 468 residues: Tyrosine-protein phosphatase YopH (468 aa).

The segment at 127–194 (ARGHVSSHSH…TVSPYGPEAR (68 aa)) is disordered. A compositionally biased stretch (low complexity) spans 130-141 (HVSSHSHSALHA). A Tyrosine-protein phosphatase domain is found at 152–461 (SHLDPRTPPL…DVLIKLAEGQ (310 aa)). Cys-403 functions as the Phosphocysteine intermediate in the catalytic mechanism.

The protein belongs to the protein-tyrosine phosphatase family. Non-receptor class subfamily.

The protein localises to the secreted. It catalyses the reaction O-phospho-L-tyrosyl-[protein] + H2O = L-tyrosyl-[protein] + phosphate. Its function is as follows. Essential virulence determinant. This protein is a protein tyrosine phosphatase. The essential function of YopH in Yersinia pathogenesis is host-protein dephosphorylation. It contributes to the ability of the bacteria to resist phagocytosis by peritoneal macrophages. This is Tyrosine-protein phosphatase YopH (yopH) from Yersinia pseudotuberculosis serotype I (strain IP32953).